The following is a 78-amino-acid chain: Large ribosomal subunit protein bL28B (78 aa).

Belongs to the bacterial ribosomal protein bL28 family.

The sequence is that of Large ribosomal subunit protein bL28B (rpmB2) from Streptomyces coelicolor (strain ATCC BAA-471 / A3(2) / M145).